Here is a 65-residue protein sequence, read N- to C-terminus: Putative antitoxin VapB7 (65 aa).

It belongs to the UPF0165 family.

Its function is as follows. Possibly the antitoxin component of a type II toxin-antitoxin (TA) system. Its cognate toxin is VapC7 (Potential). This is Putative antitoxin VapB7 (vapB7) from Archaeoglobus fulgidus (strain ATCC 49558 / DSM 4304 / JCM 9628 / NBRC 100126 / VC-16).